The following is a 272-amino-acid chain: 2-succinyl-6-hydroxy-2,4-cyclohexadiene-1-carboxylate synthase (272 aa).

Belongs to the AB hydrolase superfamily. MenH family. Monomer.

The enzyme catalyses 5-enolpyruvoyl-6-hydroxy-2-succinyl-cyclohex-3-ene-1-carboxylate = (1R,6R)-6-hydroxy-2-succinyl-cyclohexa-2,4-diene-1-carboxylate + pyruvate. It participates in quinol/quinone metabolism; 1,4-dihydroxy-2-naphthoate biosynthesis; 1,4-dihydroxy-2-naphthoate from chorismate: step 3/7. Its pathway is quinol/quinone metabolism; menaquinone biosynthesis. Its function is as follows. Catalyzes a proton abstraction reaction that results in 2,5-elimination of pyruvate from 2-succinyl-5-enolpyruvyl-6-hydroxy-3-cyclohexene-1-carboxylate (SEPHCHC) and the formation of 2-succinyl-6-hydroxy-2,4-cyclohexadiene-1-carboxylate (SHCHC). This Yersinia pestis bv. Antiqua (strain Nepal516) protein is 2-succinyl-6-hydroxy-2,4-cyclohexadiene-1-carboxylate synthase.